A 309-amino-acid polypeptide reads, in one-letter code: GTP cyclohydrolase MptA (309 aa).

This sequence belongs to the GTP cyclohydrolase IV family. Homodimer. Requires Fe(2+) as cofactor.

It carries out the reaction GTP + H2O = 7,8-dihydroneopterin 2',3'-cyclic phosphate + formate + diphosphate + H(+). The protein operates within cofactor biosynthesis; 5,6,7,8-tetrahydromethanopterin biosynthesis. Converts GTP to 7,8-dihydro-D-neopterin 2',3'-cyclic phosphate, the first intermediate in the biosynthesis of coenzyme methanopterin. The polypeptide is GTP cyclohydrolase MptA (Methanococcus aeolicus (strain ATCC BAA-1280 / DSM 17508 / OCM 812 / Nankai-3)).